The following is a 711-amino-acid chain: Ribosomal RNA large subunit methyltransferase K/L (711 aa).

A THUMP domain is found at 43–154 (TLYRTLLWSR…RENLVISLDL (112 aa)).

The protein belongs to the methyltransferase superfamily. RlmKL family.

The protein resides in the cytoplasm. The enzyme catalyses guanosine(2445) in 23S rRNA + S-adenosyl-L-methionine = N(2)-methylguanosine(2445) in 23S rRNA + S-adenosyl-L-homocysteine + H(+). It carries out the reaction guanosine(2069) in 23S rRNA + S-adenosyl-L-methionine = N(2)-methylguanosine(2069) in 23S rRNA + S-adenosyl-L-homocysteine + H(+). Specifically methylates the guanine in position 2445 (m2G2445) and the guanine in position 2069 (m7G2069) of 23S rRNA. The chain is Ribosomal RNA large subunit methyltransferase K/L from Haemophilus influenzae (strain PittEE).